Reading from the N-terminus, the 428-residue chain is Adenylosuccinate synthetase (428 aa).

GTP contacts are provided by residues 11-17 (GDEGKGK) and 39-41 (GHT). Aspartate 12 acts as the Proton acceptor in catalysis. Positions 12 and 39 each coordinate Mg(2+). IMP is bound by residues 12-15 (DEGK), 37-40 (NAGH), threonine 130, arginine 144, asparagine 226, threonine 241, and arginine 305. Residue histidine 40 is the Proton donor of the active site. 301 to 307 (VTTGRKR) lines the substrate pocket. Residues arginine 307, 333–335 (KLD), and 415–417 (GTG) each bind GTP.

The protein belongs to the adenylosuccinate synthetase family. Homodimer. Requires Mg(2+) as cofactor.

It localises to the cytoplasm. It carries out the reaction IMP + L-aspartate + GTP = N(6)-(1,2-dicarboxyethyl)-AMP + GDP + phosphate + 2 H(+). Its pathway is purine metabolism; AMP biosynthesis via de novo pathway; AMP from IMP: step 1/2. In terms of biological role, plays an important role in the de novo pathway and in the salvage pathway of purine nucleotide biosynthesis. Catalyzes the first committed step in the biosynthesis of AMP from IMP. The chain is Adenylosuccinate synthetase from Candida albicans (strain SC5314 / ATCC MYA-2876) (Yeast).